The sequence spans 197 residues: MRQATVTRNTLETRITVSLNLDGSGQARFDTGVPFLEHMLDQIARHGLIDLDITAQGDLHIDAHHTVEDLGITLGQAFARAIGDKKGIRRYGHAYVPLDEALSRVVLDLSGRPGLEYHVDYTRATIGSFDVDLFSEFFHGFVNHAMVTLHIDNLRGINSHHQAETIFKAFGRALRMAVEPDPRMAGVTPSTKGTLTA.

The protein belongs to the imidazoleglycerol-phosphate dehydratase family.

It is found in the cytoplasm. The catalysed reaction is D-erythro-1-(imidazol-4-yl)glycerol 3-phosphate = 3-(imidazol-4-yl)-2-oxopropyl phosphate + H2O. It functions in the pathway amino-acid biosynthesis; L-histidine biosynthesis; L-histidine from 5-phospho-alpha-D-ribose 1-diphosphate: step 6/9. This chain is Imidazoleglycerol-phosphate dehydratase, found in Laribacter hongkongensis (strain HLHK9).